The following is a 247-amino-acid chain: ATP synthase subunit a, chloroplastic (247 aa).

5 helical membrane-spanning segments follow: residues Gln38–Val58, Val95–Leu115, Ile134–Thr154, Leu199–Leu219, and Gly220–Gly240.

The protein belongs to the ATPase A chain family. In terms of assembly, F-type ATPases have 2 components, CF(1) - the catalytic core - and CF(0) - the membrane proton channel. CF(1) has five subunits: alpha(3), beta(3), gamma(1), delta(1), epsilon(1). CF(0) has four main subunits: a, b, b' and c.

Its subcellular location is the plastid. It localises to the chloroplast thylakoid membrane. Functionally, key component of the proton channel; it plays a direct role in the translocation of protons across the membrane. The polypeptide is ATP synthase subunit a, chloroplastic (Guizotia abyssinica (Niger)).